The sequence spans 95 residues: Aspartyl/glutamyl-tRNA(Asn/Gln) amidotransferase subunit C (95 aa).

The protein belongs to the GatC family. In terms of assembly, heterotrimer of A, B and C subunits.

The catalysed reaction is L-glutamyl-tRNA(Gln) + L-glutamine + ATP + H2O = L-glutaminyl-tRNA(Gln) + L-glutamate + ADP + phosphate + H(+). It catalyses the reaction L-aspartyl-tRNA(Asn) + L-glutamine + ATP + H2O = L-asparaginyl-tRNA(Asn) + L-glutamate + ADP + phosphate + 2 H(+). In terms of biological role, allows the formation of correctly charged Asn-tRNA(Asn) or Gln-tRNA(Gln) through the transamidation of misacylated Asp-tRNA(Asn) or Glu-tRNA(Gln) in organisms which lack either or both of asparaginyl-tRNA or glutaminyl-tRNA synthetases. The reaction takes place in the presence of glutamine and ATP through an activated phospho-Asp-tRNA(Asn) or phospho-Glu-tRNA(Gln). In Campylobacter lari (strain RM2100 / D67 / ATCC BAA-1060), this protein is Aspartyl/glutamyl-tRNA(Asn/Gln) amidotransferase subunit C.